The chain runs to 400 residues: Serine/threonine transporter SstT (400 aa).

10 helical membrane passes run 11–31 (IGLV…GWLA), 45–65 (FVGA…MAAI), 81–101 (IMYM…SFLF), 138–158 (AIAE…GFAL), 175–195 (AISQ…LGLV), 213–233 (ILMV…PLII), 242–264 (YPLV…SSAA), 295–315 (MAGA…TLGI), 327–347 (LVAT…LLLI), and 354–374 (FSIP…IGVI).

This sequence belongs to the dicarboxylate/amino acid:cation symporter (DAACS) (TC 2.A.23) family.

Its subcellular location is the cell inner membrane. It catalyses the reaction L-serine(in) + Na(+)(in) = L-serine(out) + Na(+)(out). The catalysed reaction is L-threonine(in) + Na(+)(in) = L-threonine(out) + Na(+)(out). Its function is as follows. Involved in the import of serine and threonine into the cell, with the concomitant import of sodium (symport system). In Psychrobacter cryohalolentis (strain ATCC BAA-1226 / DSM 17306 / VKM B-2378 / K5), this protein is Serine/threonine transporter SstT.